The sequence spans 353 residues: Guanine nucleotide-binding protein subunit alpha (353 aa).

The tract at residues 1–25 (MGCGMSTEDKEGKARNEEIENQLKR) is disordered. The N-myristoyl glycine moiety is linked to residue glycine 2. Cysteine 3 is lipidated: S-palmitoyl cysteine. Residues 7 to 25 (TEDKEGKARNEEIENQLKR) are compositionally biased toward basic and acidic residues. The region spanning 32–353 (NEIKMLLLGA…QENLRLCGLI (322 aa)) is the G-alpha domain. The segment at 35 to 48 (KMLLLGAGESGKST) is G1 motif. The GTP site is built by glutamate 43, serine 44, glycine 45, lysine 46, serine 47, threonine 48, aspartate 150, leucine 175, threonine 181, glycine 203, asparagine 269, lysine 270, aspartate 272, and alanine 325. A Mg(2+)-binding site is contributed by serine 47. The interval 173–181 (DVLRSRVKT) is G2 motif. Threonine 181 provides a ligand contact to Mg(2+). A G3 motif region spans residues 196-205 (YRMFDVGGQR). Positions 265 to 272 (ILFLNKID) are G4 motif. The tract at residues 323–328 (TCATDT) is G5 motif.

The protein belongs to the G-alpha family. G(q) subfamily. As to quaternary structure, g proteins are composed of 3 units; alpha, beta and gamma. The alpha chain contains the guanine nucleotide binding site. It depends on Mg(2+) as a cofactor.

In terms of biological role, guanine nucleotide-binding proteins (G proteins) are involved as modulators or transducers in various transmembrane signaling systems. This Emericella nidulans (strain FGSC A4 / ATCC 38163 / CBS 112.46 / NRRL 194 / M139) (Aspergillus nidulans) protein is Guanine nucleotide-binding protein subunit alpha (fadA).